Consider the following 101-residue polypeptide: NAD(P)H-quinone oxidoreductase subunit 4L (101 aa).

3 helical membrane-spanning segments follow: residues 3 to 23, 30 to 50, and 64 to 84; these read LRYF…GLIT, VLMS…AFSN, and VFVI…VLAI.

It belongs to the complex I subunit 4L family. NDH-1 can be composed of about 15 different subunits; different subcomplexes with different compositions have been identified which probably have different functions.

It localises to the cellular thylakoid membrane. It catalyses the reaction a plastoquinone + NADH + (n+1) H(+)(in) = a plastoquinol + NAD(+) + n H(+)(out). It carries out the reaction a plastoquinone + NADPH + (n+1) H(+)(in) = a plastoquinol + NADP(+) + n H(+)(out). Functionally, NDH-1 shuttles electrons from an unknown electron donor, via FMN and iron-sulfur (Fe-S) centers, to quinones in the respiratory and/or the photosynthetic chain. The immediate electron acceptor for the enzyme in this species is believed to be plastoquinone. Couples the redox reaction to proton translocation, and thus conserves the redox energy in a proton gradient. Cyanobacterial NDH-1 also plays a role in inorganic carbon-concentration. This Nostoc sp. (strain PCC 7120 / SAG 25.82 / UTEX 2576) protein is NAD(P)H-quinone oxidoreductase subunit 4L.